Here is a 1578-residue protein sequence, read N- to C-terminus: MATLACRVQFLDDTDPFNSTNFPEPSRPPLFTFREDLALGTQLAGVHRLLRAPHKLDDCTLQLSHNGAYLDLEATLAEQRDELEGFQDDTGRGKKNSIILRTQLSVRVHACIEKLYNSSGRDLRRALFSLKQIFQDDKDLVHEFVIAEGLTCLIKVGAEADQNYQNYILRALGQIMLYVDGMNGVINHSETIQWLYTLVGSKFRLVVKTALKLLLVFVEYSESNAPLLIQAVSAVDTKRGVKPWSNIMEILEEKDGVDTELLVYAMTLVNKTLAGLPDQDTFYDVVDCLEELGIAAVSQRHLNKKGTDLDLLEQFNIYEVALRHEDGDETAEPPPSGHRDRRRASMCSGGTVGEQQGLDRRRSRRHSIQNIKSPLSAPTSPCSPSVPAFKPSQVRDLCEKDEEEEEEEEQPITEPNSEEEREDDAQCQGKDSKASSASGQSSPGKDAAPESSALHTTSSPTSQGRWLSASTAARSPVLGGTSGPEASRPAARLLPPSPGLATRPSTAPKVSPTIDKLPYVPHSPFHLFSYDFEDSPLLTKDKGGDSQTENRYSNFSSNSFQSSRPSPGPSGSPSYASSFSSPQDTRSSPSGLLTSSFRQHQESLAAERERRRQEREERLQRIEREERNKFNREYLDKREEQRQARGERYKYLEQLAAETQEKEPRSQSVSRGRADLSLDLSLPAAPAPPSPSSQSPSADSQEALPVPSSPPTLQCPQVSGKDHEPELEAEAGQGADEASQDIASAHRGAESQEEPVLELEPEERASLSEKERQNEEVNERDNCSASSISSSSSTLEREEKEDKLSEDRATGLWSTSLQDVGVNGQCGDILTSKRFMLDMLYAHNRKSTEDEEKDDGEPGRSAQEVEAVASLATRISTLQANSQAPEESIKRVDIGCLDNRGSVKAFAEKFNSGEVGRGAISPDVESQDKVPDTPPAQLKTESDYIWDQLMANPRELRIQDMDFTDLGEEDDIDVLDVDLGHREAPGPPPPPPPTFLGLPPPPPPPLLDSVPPPPVPGNLLASPVFNTPQGLGWSQVPRGQPAFTKKKKTIRLFWNEVRPFEWPSKNNRRCREFLWSKLEPIKVDTSRLEHLFESKSKELSVTKKTAADGKRQEIIVLDSKRSNAINIGLTVLPPPRTIKIAILNFDEYALNKEGIEKILTMIPTEEEKQKIQEAQLANPEVPLGSAEQFLLTLSSISELSARLHLWAFKMDYETTEKEVAEPLLDLKEGIDQLENNKTLGFILSTLLAIGNFLNGTNAKAFELSYLEKVPEVKDTVHKQSLLHHVCTMVVENFPDSSDLYSEIGAITRSAKVDFDQLQDNLCQMERRCKASWDHLKAIAKHEMKPVLKQRMSEFLKDCAERIIILKIVHRRIINRFHSFLLFMGHPPYAIREVNINKFCRIISEFALEYRTTRERVLQQKQKRANHRERNKTRGKMITDSGKFSGSSPAAPSQPQGLSYAEDAAEHENMKAVLKTSSPALEDATPVLGVRTRSRASRGSTSSWTMGTEESPSVTDDAADEIMDRIVKSATQVPSQRVVPRERKRSRANRKSLRRTLKSGLTPEEARALGLVGTSELQL.

In terms of domain architecture, GBD/FH3 spans 18–405 (NSTNFPEPSR…DLCEKDEEEE (388 aa)). 7 disordered regions span residues 324-518 (HEDG…DKLP), 535-824 (SPLL…GVNG), 915-942 (VGRG…KTES), 979-1013 (LGHR…VPPP), 1418-1462 (QQKQ…YAED), 1490-1514 (RTRS…PSVT), and 1528-1565 (SATQ…PEEA). Residues S345 and S376 each carry the phosphoserine modification. Over residues 368–383 (IQNIKSPLSAPTSPCS) the composition is skewed to polar residues. Positions 399–425 (EKDEEEEEEEEQPITEPNSEEEREDDA) are enriched in acidic residues. Residue T413 is modified to Phosphothreonine. A compositionally biased stretch (low complexity) spans 434–446 (ASSASGQSSPGKD). Positions 453 to 473 (ALHTTSSPTSQGRWLSASTAA) are enriched in polar residues. Low complexity predominate over residues 553–583 (SNFSSNSFQSSRPSPGPSGSPSYASSFSSPQ). Residues 584–598 (DTRSSPSGLLTSSFR) show a composition bias toward polar residues. Positions 597 to 645 (FRQHQESLAAERERRRQEREERLQRIEREERNKFNREYLDKREEQRQAR) form a coiled coil. Basic and acidic residues predominate over residues 599-651 (QHQESLAAERERRRQEREERLQRIEREERNKFNREYLDKREEQRQARGERYKY). 2 stretches are compositionally biased toward low complexity: residues 675–684 (DLSLDLSLPA) and 692–701 (SSQSPSADSQ). Positions 751–761 (SQEEPVLELEP) are enriched in acidic residues. The segment covering 762–782 (EERASLSEKERQNEEVNERDN) has biased composition (basic and acidic residues). A compositionally biased stretch (low complexity) spans 784-793 (SASSISSSSS). Basic and acidic residues predominate over residues 795 to 809 (LEREEKEDKLSEDRA). S921 bears the Phosphoserine mark. T933 carries the post-translational modification Phosphothreonine. A compositionally biased stretch (pro residues) spans 985–1013 (PGPPPPPPPTFLGLPPPPPPPLLDSVPPP). The region spanning 985–1016 (PGPPPPPPPTFLGLPPPPPPPLLDSVPPPPVP) is the FH1 domain. One can recognise an FH2 domain in the interval 1039–1435 (GQPAFTKKKK…HRERNKTRGK (397 aa)). Over residues 1420-1434 (KQKRANHRERNKTRG) the composition is skewed to basic residues. Low complexity predominate over residues 1444–1456 (SGSSPAAPSQPQG). In terms of domain architecture, DAD spans 1515-1547 (DDAADEIMDRIVKSATQVPSQRVVPRERKRSRA). Basic residues predominate over residues 1541–1556 (ERKRSRANRKSLRRTL).

This sequence belongs to the formin homology family. Interacts with nestin/NES-based interfilament (IF). Interacts with SQSTM1. Expressed in the heart, including left ventricle, kidney, brain and skeletal muscle, including soleus and tibialis anterior (at protein level).

The protein resides in the cytoplasm. It localises to the cytoskeleton. Its subcellular location is the myofibril. It is found in the sarcomere. The protein localises to the z line. Its function is as follows. May play a role in actin filament polymerization in cardiomyocytes. Actin-organizing protein that may cause stress fiber formation together with cell elongation. This Mus musculus (Mouse) protein is FH1/FH2 domain-containing protein 3 (Fhod3).